The sequence spans 286 residues: uncharacterized protein (286 aa).

A run of 2 helical transmembrane segments spans residues 201–221 (VIYSITGAFSFIFGLGVLCET) and 231–251 (AIILGFIILILILAIVNYLMM).

The protein localises to the cell membrane. This is an uncharacterized protein from Methanocaldococcus jannaschii (strain ATCC 43067 / DSM 2661 / JAL-1 / JCM 10045 / NBRC 100440) (Methanococcus jannaschii).